Consider the following 243-residue polypeptide: Triosephosphate isomerase (243 aa).

9–11 (NWK) is a substrate binding site. The Electrophile role is filled by His96. Glu165 serves as the catalytic Proton acceptor. Substrate-binding positions include Gly171, Ser204, and 225-226 (GG).

This sequence belongs to the triosephosphate isomerase family. As to quaternary structure, homodimer.

The protein resides in the cytoplasm. It carries out the reaction D-glyceraldehyde 3-phosphate = dihydroxyacetone phosphate. The protein operates within carbohydrate biosynthesis; gluconeogenesis. It functions in the pathway carbohydrate degradation; glycolysis; D-glyceraldehyde 3-phosphate from glycerone phosphate: step 1/1. Functionally, involved in the gluconeogenesis. Catalyzes stereospecifically the conversion of dihydroxyacetone phosphate (DHAP) to D-glyceraldehyde-3-phosphate (G3P). This is Triosephosphate isomerase from Prochlorococcus marinus (strain SARG / CCMP1375 / SS120).